The chain runs to 397 residues: Ubiquitin-like modifier-activating enzyme 5 (397 aa).

Residues Gly76, Asp97, Lys120, Asn143, and Asn177 each contribute to the ATP site. Zn(2+) contacts are provided by Cys219 and Cys222. The Glycyl thioester intermediate role is filled by Cys243. Positions 296 and 301 each coordinate Zn(2+). Residues Leu362–Asp384 are disordered. The segment covering Thr375–Asp384 has biased composition (low complexity).

This sequence belongs to the ubiquitin-activating E1 family. UBA5 subfamily.

E1-like enzyme which activates UFM1. The polypeptide is Ubiquitin-like modifier-activating enzyme 5 (Aedes aegypti (Yellowfever mosquito)).